A 226-amino-acid polypeptide reads, in one-letter code: ATP-dependent Clp protease proteolytic subunit 4 (226 aa).

S122 (nucleophile) is an active-site residue. H147 is a catalytic residue.

It belongs to the peptidase S14 family. As to quaternary structure, fourteen ClpP subunits assemble into 2 heptameric rings which stack back to back to give a disk-like structure with a central cavity, resembling the structure of eukaryotic proteasomes.

It localises to the cytoplasm. It catalyses the reaction Hydrolysis of proteins to small peptides in the presence of ATP and magnesium. alpha-casein is the usual test substrate. In the absence of ATP, only oligopeptides shorter than five residues are hydrolyzed (such as succinyl-Leu-Tyr-|-NHMec, and Leu-Tyr-Leu-|-Tyr-Trp, in which cleavage of the -Tyr-|-Leu- and -Tyr-|-Trp bonds also occurs).. Functionally, cleaves peptides in various proteins in a process that requires ATP hydrolysis. Has a chymotrypsin-like activity. Plays a major role in the degradation of misfolded proteins. In Streptomyces avermitilis (strain ATCC 31267 / DSM 46492 / JCM 5070 / NBRC 14893 / NCIMB 12804 / NRRL 8165 / MA-4680), this protein is ATP-dependent Clp protease proteolytic subunit 4.